The chain runs to 610 residues: UvrABC system protein C (610 aa).

A GIY-YIG domain is found at 16 to 94; sequence NQPGVYRMYN…IKQYLPKYNV (79 aa). In terms of domain architecture, UVR spans 204–239; the sequence is NQVLSILVEKMEQASRELRFEDAAKARDQIQAIRRV.

The protein belongs to the UvrC family. As to quaternary structure, interacts with UvrB in an incision complex.

The protein resides in the cytoplasm. The UvrABC repair system catalyzes the recognition and processing of DNA lesions. UvrC both incises the 5' and 3' sides of the lesion. The N-terminal half is responsible for the 3' incision and the C-terminal half is responsible for the 5' incision. The polypeptide is UvrABC system protein C (Vibrio cholerae serotype O1 (strain ATCC 39315 / El Tor Inaba N16961)).